Here is a 709-residue protein sequence, read N- to C-terminus: Probable lanosterol 14-alpha demethylase (709 aa).

Cysteine 425 contacts heme.

This sequence belongs to the cytochrome P450 family. The cofactor is heme.

The protein localises to the membrane. The catalysed reaction is a 14alpha-methyl steroid + 3 reduced [NADPH--hemoprotein reductase] + 3 O2 = a Delta(14) steroid + formate + 3 oxidized [NADPH--hemoprotein reductase] + 4 H2O + 4 H(+). It functions in the pathway steroid biosynthesis; zymosterol biosynthesis; zymosterol from lanosterol: step 1/6. In terms of biological role, catalyzes the 14-alpha demethylation of obtusifoliol to 4 alpha-methyl-5 alpha-ergosta-8,14,24(28)-trien-3 beta-ol. The protein is Probable lanosterol 14-alpha demethylase of Acanthamoeba polyphaga (Amoeba).